The primary structure comprises 63 residues: Large ribosomal subunit protein uL30 (63 aa).

The protein belongs to the universal ribosomal protein uL30 family. Part of the 50S ribosomal subunit.

This is Large ribosomal subunit protein uL30 from Hahella chejuensis (strain KCTC 2396).